We begin with the raw amino-acid sequence, 67 residues long: Teratocyte protein CftICK-II (67 aa).

A signal peptide spans 1–25 (MVKSLLFAIGYLIFLLVTRVNVINA). 3 cysteine pairs are disulfide-bonded: Cys28–Cys42, Cys35–Cys46, and Cys41–Cys57.

As to expression, abundantly expressed by teratocytes, which are extra-embryonic cells released by parasitoid wasps into their hosts during larval eclosion.

Its subcellular location is the secreted. Functionally, this endoparasitoid wasp peptide has immununosuppressive, antimicrobial and insecticidal activities. Suppress cellular immunity which is detectable as a reduction of hemocyte encapsulation in the host. Shows moderate antifungal activity against C.albicans (MIC=4 ug/ml). In vivo, ingestion of this peptide (probably at excessive doses) increases larval mortality and reduces leaf consumption of D.saccharalis, a permissive host for C.flavipes. The protein is Teratocyte protein CftICK-II of Cotesia flavipes (Parasitic wasp).